The chain runs to 275 residues: Phospholipid scramblase (275 aa).

Residues 256–272 (WKMMLLAFALFLDYMYY) form a helical membrane-spanning segment.

Belongs to the phospholipid scramblase family. Forms homooligomers in the presence of calcium. Ca(2+) serves as cofactor. Mg(2+) is required as a cofactor.

It localises to the membrane. The protein resides in the cell membrane. The catalysed reaction is a 1,2-diacyl-sn-glycero-3-phosphoethanolamine(in) = a 1,2-diacyl-sn-glycero-3-phosphoethanolamine(out). In terms of biological role, catalyzes calcium-induced ATP-independent rapid bidirectional and non-specific movement of phospholipids (lipid scrambling or lipid flip-flop) between the inner and outer leaflet of the plasma membrane resulting in collapse of the phospholipid asymmetry. Preferentially, mediates calcium-dependent phosphatidylethanolamine externalization. During the liver stage, plays a role in the interaction with, and thus invasion of, host hepatocytes. Dispensable for host erythrocyte invasion and asexual parasite development. In Plasmodium falciparum (isolate 3D7), this protein is Phospholipid scramblase.